A 681-amino-acid chain; its full sequence is Methionine--tRNA ligase (681 aa).

The 'HIGH' region signature appears at 27–37; the sequence is DYANGTPHIGH. The 'KMSKS' region signature appears at 316 to 320; that stretch reads KMGKS. Position 319 (Lys-319) interacts with ATP. The interval 522 to 571 is disordered; that stretch reads FPKPEPKADETKNAEAKPPKPQAKKEKKTVTDTAPAKTTEQKPEAAAPAQ. A compositionally biased stretch (basic and acidic residues) spans 525-539; sequence PEPKADETKNAEAKP. In terms of domain architecture, tRNA-binding spans 580–681; the sequence is DFAKIDLRIA…LDLPSGTKVR (102 aa).

It belongs to the class-I aminoacyl-tRNA synthetase family. MetG type 2B subfamily. In terms of assembly, homodimer.

The protein resides in the cytoplasm. It catalyses the reaction tRNA(Met) + L-methionine + ATP = L-methionyl-tRNA(Met) + AMP + diphosphate. Functionally, is required not only for elongation of protein synthesis but also for the initiation of all mRNA translation through initiator tRNA(fMet) aminoacylation. This chain is Methionine--tRNA ligase (metG), found in Deinococcus radiodurans (strain ATCC 13939 / DSM 20539 / JCM 16871 / CCUG 27074 / LMG 4051 / NBRC 15346 / NCIMB 9279 / VKM B-1422 / R1).